A 211-amino-acid polypeptide reads, in one-letter code: Thiamine-phosphate synthase (211 aa).

4-amino-2-methyl-5-(diphosphooxymethyl)pyrimidine is bound by residues 43–47 (QLRDK) and asparagine 75. Mg(2+) contacts are provided by aspartate 76 and aspartate 95. Serine 114 lines the 4-amino-2-methyl-5-(diphosphooxymethyl)pyrimidine pocket. Residue 140–142 (TAS) participates in 2-[(2R,5Z)-2-carboxy-4-methylthiazol-5(2H)-ylidene]ethyl phosphate binding. A 4-amino-2-methyl-5-(diphosphooxymethyl)pyrimidine-binding site is contributed by lysine 143. 2-[(2R,5Z)-2-carboxy-4-methylthiazol-5(2H)-ylidene]ethyl phosphate is bound by residues glycine 170 and 190-191 (IS).

The protein belongs to the thiamine-phosphate synthase family. Mg(2+) serves as cofactor.

It carries out the reaction 2-[(2R,5Z)-2-carboxy-4-methylthiazol-5(2H)-ylidene]ethyl phosphate + 4-amino-2-methyl-5-(diphosphooxymethyl)pyrimidine + 2 H(+) = thiamine phosphate + CO2 + diphosphate. The enzyme catalyses 2-(2-carboxy-4-methylthiazol-5-yl)ethyl phosphate + 4-amino-2-methyl-5-(diphosphooxymethyl)pyrimidine + 2 H(+) = thiamine phosphate + CO2 + diphosphate. It catalyses the reaction 4-methyl-5-(2-phosphooxyethyl)-thiazole + 4-amino-2-methyl-5-(diphosphooxymethyl)pyrimidine + H(+) = thiamine phosphate + diphosphate. It participates in cofactor biosynthesis; thiamine diphosphate biosynthesis; thiamine phosphate from 4-amino-2-methyl-5-diphosphomethylpyrimidine and 4-methyl-5-(2-phosphoethyl)-thiazole: step 1/1. Functionally, condenses 4-methyl-5-(beta-hydroxyethyl)thiazole monophosphate (THZ-P) and 2-methyl-4-amino-5-hydroxymethyl pyrimidine pyrophosphate (HMP-PP) to form thiamine monophosphate (TMP). This chain is Thiamine-phosphate synthase, found in Coprothermobacter proteolyticus (strain ATCC 35245 / DSM 5265 / OCM 4 / BT).